We begin with the raw amino-acid sequence, 402 residues long: Omega-3 fatty acid desaturase fat-1 (402 aa).

4 helical membrane-spanning segments follow: residues 79–99 (LVQDFAALTILYFALPAFEYF), 101–121 (LFGYLVWNIFMGVFGFALFVV), 235–255 (CVISGICCCVCAYIALTIAGS), and 260–280 (FWYYWVPLSFFGLMLVIVTYL).

This sequence belongs to the fatty acid desaturase type 1 family.

The protein resides in the membrane. The catalysed reaction is (9Z,12Z)-octadecadienoyl-CoA + 2 Fe(II)-[cytochrome b5] + O2 + 2 H(+) = (9Z,12Z,15Z)-octadecatrienoyl-CoA + 2 Fe(III)-[cytochrome b5] + 2 H2O. The enzyme catalyses (8Z,11Z,14Z)-eicosatrienoyl-CoA + 2 Fe(II)-[cytochrome b5] + O2 + 2 H(+) = (8Z,11Z,14Z,17Z)-eicosatetraenoyl-CoA + 2 Fe(III)-[cytochrome b5] + 2 H2O. It carries out the reaction (5Z,8Z,11Z,14Z)-eicosatetraenoyl-CoA + 2 Fe(II)-[cytochrome b5] + O2 + 2 H(+) = (5Z,8Z,11Z,14Z,17Z)-eicosapentaenoyl-CoA + 2 Fe(III)-[cytochrome b5] + 2 H2O. It catalyses the reaction (7Z,10Z,13Z,16Z)-docosatetraenoyl-CoA + 2 Fe(II)-[cytochrome b5] + O2 + 2 H(+) = (7Z,10Z,13Z,16Z,19Z)-docosapentaenoyl-CoA + 2 Fe(III)-[cytochrome b5] + 2 H2O. The catalysed reaction is (6Z,9Z,12Z)-octadecatrienoyl-CoA + 2 Fe(II)-[cytochrome b5] + O2 + 2 H(+) = (6Z,9Z,12Z,15Z)-octadecatetraenoyl-CoA + 2 Fe(III)-[cytochrome b5] + 2 H2O. It functions in the pathway lipid metabolism; polyunsaturated fatty acid biosynthesis. In terms of biological role, omega-3 fatty acid desaturase that recognizes a range of 18- and 20-carbon omega-6 substrates. Introduces a double bond in the fatty acid chain three carbons away from terminal methyl group to biosynthesize n-3 (omega-3) polyunsaturated fatty acids (PUFAs) endogenously (PUFAs are essential for membrane structure and many cellular and physiological processes). Acts on a number of substrates like linoleoyl-CoA ((9Z,12Z)-octadecadienoyl-CoA, 18:2n-6), dihomo-gamma-linolenoyl-CoA ((8Z,11Z,14Z)-eicosatrienoyl-CoA, 20:3n-6), and arachidonoyl-CoA ((5Z,8Z,11Z,14Z)-eicosatetraenoyl-CoA, 20:4n-6), to generate alpha-linolenoyl-CoA ((9Z,12Z,15Z)-octadecatrienoyl-CoA, 18:3n-3), (8Z,11Z,14Z,17Z)-eicosatetraenoyl-CoA (20:4n-3) and (5Z,8Z,11Z,14Z,17Z)-eicosapentaenoyl-CoA (20:5n-3) respectively. Unlike plants, Caenorhabditis elegans desaturases seem to use fatty acyl-CoAs as substrates. The protein is Omega-3 fatty acid desaturase fat-1 (fat-1) of Caenorhabditis elegans.